Consider the following 250-residue polypeptide: tRNA (guanine-N(1)-)-methyltransferase (250 aa).

S-adenosyl-L-methionine contacts are provided by residues G113 and 133–138 (IGDYVL).

The protein belongs to the RNA methyltransferase TrmD family. Homodimer.

Its subcellular location is the cytoplasm. The catalysed reaction is guanosine(37) in tRNA + S-adenosyl-L-methionine = N(1)-methylguanosine(37) in tRNA + S-adenosyl-L-homocysteine + H(+). Functionally, specifically methylates guanosine-37 in various tRNAs. The polypeptide is tRNA (guanine-N(1)-)-methyltransferase (Photorhabdus laumondii subsp. laumondii (strain DSM 15139 / CIP 105565 / TT01) (Photorhabdus luminescens subsp. laumondii)).